The sequence spans 320 residues: MSKSESPKEPEQLRKLFIGGLSFETTDESLRSHFEQWGTLTDCVVMRDPNTKRSRGFGFVTYATVEEVDAAMNARPHKVDGRVVEPKRAVSREDSQRPDAHLTVKKIFVGGIKEDTEEHHLRDYFEQYGKIEVIEIMTDRGSGKKRGFAFVTFDDHDSVDKIVIQKYHTVNGHNCEVRKALSKQEMASASSSQRGRSGSGNFGGGRGGGFGGNDNFGRGGNFSGRGGFGGSRGGGGYGGSGDGYNGFGNDGSNFGGGGSYNDFGNYNNQSSNFGPMKGGNFEGRSSGPHGGGGQYFAKPRNQGGYGGSSSSSSYGSGRRF.

RRM domains are found at residues 14 to 97 (RKLF…DSQR) and 105 to 184 (KKIF…LSKQ). Disordered regions lie at residues 182–218 (SKQE…NFGR) and 271–320 (SNFG…GRRF). Gly residues predominate over residues 197–218 (SGSGNFGGGRGGGFGGNDNFGR). A compositionally biased stretch (low complexity) spans 308 to 320 (SSSSSSYGSGRRF).

This chain is Heterogeneous nuclear ribonucleoprotein A1-like 3, found in Homo sapiens (Human).